Reading from the N-terminus, the 256-residue chain is Chalcone--flavanone isomerase (256 aa).

Positions 51, 116, and 193 each coordinate substrate. Residues 219-256 form a disordered region; the sequence is NSTTDLNESENEKLNSNEVSKEEKPLQVEKSAFKEVEV. Over residues 228 to 256 the composition is skewed to basic and acidic residues; that stretch reads ENEKLNSNEVSKEEKPLQVEKSAFKEVEV.

The protein belongs to the chalcone isomerase family. As to expression, nodules.

The catalysed reaction is a chalcone = a flavanone.. Its pathway is secondary metabolite biosynthesis; flavonoid biosynthesis. Functionally, catalyzes the intramolecular cyclization of bicyclic chalcones into tricyclic (S)-flavanones. Responsible for the isomerization of 4,2',4',6'-tetrahydroxychalcone (also termed chalcone) into naringenin. The protein is Chalcone--flavanone isomerase (CHI) of Elaeagnus umbellata (Autumn olive).